Here is a 91-residue protein sequence, read N- to C-terminus: Small ribosomal subunit protein eS24 (91 aa).

Residues 51 to 91 form a disordered region; it reads QRRKDAAAHKEAYNAMPEAERRHLNSEKYANRKAEVSYKHR.

It belongs to the eukaryotic ribosomal protein eS24 family.

In Caenorhabditis elegans, this protein is Small ribosomal subunit protein eS24.